The sequence spans 376 residues: UPF0754 membrane protein SE_1527 (376 aa).

A run of 2 helical transmembrane segments spans residues Ile4 to Ile24 and Thr356 to Val376.

It belongs to the UPF0754 family.

The protein resides in the cell membrane. The sequence is that of UPF0754 membrane protein SE_1527 from Staphylococcus epidermidis (strain ATCC 12228 / FDA PCI 1200).